We begin with the raw amino-acid sequence, 356 residues long: UDP-N-acetylglucosamine--N-acetylmuramyl-(pentapeptide) pyrophosphoryl-undecaprenol N-acetylglucosamine transferase (356 aa).

Residues 12–14 (TGG), N124, R163, S188, I242, 261–266 (ALTVCE), and Q287 contribute to the UDP-N-acetyl-alpha-D-glucosamine site.

This sequence belongs to the glycosyltransferase 28 family. MurG subfamily.

The protein localises to the cell inner membrane. The catalysed reaction is di-trans,octa-cis-undecaprenyl diphospho-N-acetyl-alpha-D-muramoyl-L-alanyl-D-glutamyl-meso-2,6-diaminopimeloyl-D-alanyl-D-alanine + UDP-N-acetyl-alpha-D-glucosamine = di-trans,octa-cis-undecaprenyl diphospho-[N-acetyl-alpha-D-glucosaminyl-(1-&gt;4)]-N-acetyl-alpha-D-muramoyl-L-alanyl-D-glutamyl-meso-2,6-diaminopimeloyl-D-alanyl-D-alanine + UDP + H(+). It functions in the pathway cell wall biogenesis; peptidoglycan biosynthesis. In terms of biological role, cell wall formation. Catalyzes the transfer of a GlcNAc subunit on undecaprenyl-pyrophosphoryl-MurNAc-pentapeptide (lipid intermediate I) to form undecaprenyl-pyrophosphoryl-MurNAc-(pentapeptide)GlcNAc (lipid intermediate II). The chain is UDP-N-acetylglucosamine--N-acetylmuramyl-(pentapeptide) pyrophosphoryl-undecaprenol N-acetylglucosamine transferase from Stutzerimonas stutzeri (strain A1501) (Pseudomonas stutzeri).